The sequence spans 179 residues: ATP synthase subunit delta (179 aa).

Belongs to the ATPase delta chain family. In terms of assembly, F-type ATPases have 2 components, F(1) - the catalytic core - and F(0) - the membrane proton channel. F(1) has five subunits: alpha(3), beta(3), gamma(1), delta(1), epsilon(1). F(0) has three main subunits: a(1), b(2) and c(10-14). The alpha and beta chains form an alternating ring which encloses part of the gamma chain. F(1) is attached to F(0) by a central stalk formed by the gamma and epsilon chains, while a peripheral stalk is formed by the delta and b chains.

The protein resides in the cell membrane. Functionally, f(1)F(0) ATP synthase produces ATP from ADP in the presence of a proton or sodium gradient. F-type ATPases consist of two structural domains, F(1) containing the extramembraneous catalytic core and F(0) containing the membrane proton channel, linked together by a central stalk and a peripheral stalk. During catalysis, ATP synthesis in the catalytic domain of F(1) is coupled via a rotary mechanism of the central stalk subunits to proton translocation. Its function is as follows. This protein is part of the stalk that links CF(0) to CF(1). It either transmits conformational changes from CF(0) to CF(1) or is implicated in proton conduction. This is ATP synthase subunit delta from Staphylococcus aureus (strain bovine RF122 / ET3-1).